A 500-amino-acid polypeptide reads, in one-letter code: Probable betaine aldehyde dehydrogenase (500 aa).

Residue 249–254 participates in NAD(+) binding; it reads GSLATG. Residue Glu271 is the Proton acceptor of the active site. Residue Cys305 is the Nucleophile of the active site.

It belongs to the aldehyde dehydrogenase family.

The catalysed reaction is betaine aldehyde + NAD(+) + H2O = glycine betaine + NADH + 2 H(+). It functions in the pathway amine and polyamine biosynthesis; betaine biosynthesis via choline pathway; betaine from betaine aldehyde: step 1/1. This is Probable betaine aldehyde dehydrogenase (meu8) from Schizosaccharomyces pombe (strain 972 / ATCC 24843) (Fission yeast).